Reading from the N-terminus, the 575-residue chain is Alpha-humulene synthase (575 aa).

Mg(2+) contacts are provided by D325, D329, D469, and E477. The DDXXD motif signature appears at 325 to 329 (DDLYD).

Belongs to the terpene synthase family. Tpsa subfamily. The cofactor is Mg(2+). Mn(2+) serves as cofactor.

The catalysed reaction is (2E,6E)-farnesyl diphosphate = alpha-humulene + diphosphate. It functions in the pathway sesquiterpene biosynthesis. The protein operates within terpene metabolism; oleoresin biosynthesis. Terpene synthase (TPS) involved in the biosynthesis of sesquiterpene natural products included in conifer oleoresin secretions and volatile emissions; these compounds contribute to biotic and abiotic stress defense against herbivores and pathogens. Catalyzes the conversion of (2E,6E)-farnesyl diphosphate (FPP) to (1E,4E,8E)-alpha-humulene. The protein is Alpha-humulene synthase of Picea glauca (White spruce).